The primary structure comprises 435 residues: Ribosomal protein uS12 methylthiotransferase RimO (435 aa).

In terms of domain architecture, MTTase N-terminal spans 3–115 (KKLHVVSLGC…IDELISQKKS (113 aa)). 6 residues coordinate [4Fe-4S] cluster: cysteine 12, cysteine 46, cysteine 78, cysteine 146, cysteine 150, and cysteine 153. The Radical SAM core domain occupies 132–361 (TGSNYHAYIK…DAIVKKQQMK (230 aa)).

Belongs to the methylthiotransferase family. RimO subfamily. Requires [4Fe-4S] cluster as cofactor.

The protein localises to the cytoplasm. The enzyme catalyses L-aspartate(89)-[ribosomal protein uS12]-hydrogen + (sulfur carrier)-SH + AH2 + 2 S-adenosyl-L-methionine = 3-methylsulfanyl-L-aspartate(89)-[ribosomal protein uS12]-hydrogen + (sulfur carrier)-H + 5'-deoxyadenosine + L-methionine + A + S-adenosyl-L-homocysteine + 2 H(+). Catalyzes the methylthiolation of an aspartic acid residue of ribosomal protein uS12. The sequence is that of Ribosomal protein uS12 methylthiotransferase RimO from Nitratiruptor sp. (strain SB155-2).